The primary structure comprises 246 residues: Auxin-responsive protein IAA11 (246 aa).

The EAR-like (transcriptional repression) signature appears at 36 to 40; the sequence is LGLTL. One can recognise a PB1 domain in the interval 136 to 235; that stretch reads SMFVKVTMDG…SVRRLRIMKT (100 aa).

Belongs to the Aux/IAA family. Homodimers and heterodimers. Interacts with TPL. In terms of tissue distribution, preferentially expressed in stems and flowers.

The protein localises to the nucleus. Aux/IAA proteins are short-lived transcriptional factors that function as repressors of early auxin response genes at low auxin concentrations. Repression is thought to result from the interaction with auxin response factors (ARFs), proteins that bind to the auxin-responsive promoter element (AuxRE). Formation of heterodimers with ARF proteins may alter their ability to modulate early auxin response genes expression. In Arabidopsis thaliana (Mouse-ear cress), this protein is Auxin-responsive protein IAA11 (IAA11).